A 190-amino-acid polypeptide reads, in one-letter code: NADH-quinone oxidoreductase subunit C (190 aa).

It belongs to the complex I 30 kDa subunit family. In terms of assembly, NDH-1 is composed of 14 different subunits. Subunits NuoB, C, D, E, F, and G constitute the peripheral sector of the complex.

It is found in the cell membrane. It catalyses the reaction a quinone + NADH + 5 H(+)(in) = a quinol + NAD(+) + 4 H(+)(out). Its function is as follows. NDH-1 shuttles electrons from NADH, via FMN and iron-sulfur (Fe-S) centers, to quinones in the respiratory chain. The immediate electron acceptor for the enzyme in this species is believed to be ubiquinone. Couples the redox reaction to proton translocation (for every two electrons transferred, four hydrogen ions are translocated across the cytoplasmic membrane), and thus conserves the redox energy in a proton gradient. The sequence is that of NADH-quinone oxidoreductase subunit C from Wolbachia sp. subsp. Brugia malayi (strain TRS).